We begin with the raw amino-acid sequence, 194 residues long: Translation machinery-associated protein 22 (194 aa).

The 72-residue stretch at 102-173 (VQIKRVERNK…DVQEWLLELY (72 aa)) folds into the SUI1 domain.

Belongs to the DENR family. Interacts with the 40S ribosomal subunit.

It localises to the cytoplasm. The chain is Translation machinery-associated protein 22 (tma22) from Neosartorya fischeri (strain ATCC 1020 / DSM 3700 / CBS 544.65 / FGSC A1164 / JCM 1740 / NRRL 181 / WB 181) (Aspergillus fischerianus).